The sequence spans 145 residues: Transcriptional regulator ZitR (145 aa).

The region spanning 1–142 (MSLANQIDQF…ISQFLSVLTE (142 aa)) is the HTH marR-type domain. Zn(2+)-binding residues include Glu23, Cys29, Glu40, and His41. Residues 53 to 76 (NARIAEQLKISPAAVTKALKKLQE) constitute a DNA-binding region (H-T-H motif). Residues Glu106, His107, and His111 each coordinate Zn(2+).

Homodimer.

With respect to regulation, zinc acts as a corepressor and is required for DNA-binding activity. Binds up to two zinc ligands per monomer. Inactive under zinc deprivation. Its function is as follows. Zinc-responsive regulator that represses expression of the zit operon in the presence of zinc. Acts by binding two palindromic operator sites overlapping the -35 and -10 boxes of the zit promoter. Could be a sensitive sensor of intracellular zinc to efficiently respond to zinc variations in the environment. This chain is Transcriptional regulator ZitR (zitR), found in Lactococcus lactis subsp. cremoris (strain MG1363).